An 89-amino-acid polypeptide reads, in one-letter code: MARSLKKGPFVDHHLVAKVAAAAGSKRPIKTWSRRSMILPDMVGVTIAVHNGKNHIPVLVNENMVGHKLGEFAITRTFKGHGGDKKSGK.

Belongs to the universal ribosomal protein uS19 family.

Protein S19 forms a complex with S13 that binds strongly to the 16S ribosomal RNA. The polypeptide is Small ribosomal subunit protein uS19 (Stenotrophomonas maltophilia (strain R551-3)).